The following is a 246-amino-acid chain: Orotidine 5'-phosphate decarboxylase (246 aa).

Residues Asp-22, Lys-44, 71–80 (DLKYHDIPHT), Thr-130, Arg-191, Gln-201, Gly-221, and Arg-222 contribute to the substrate site. The active-site Proton donor is Lys-73.

This sequence belongs to the OMP decarboxylase family. Type 1 subfamily. In terms of assembly, homodimer.

It carries out the reaction orotidine 5'-phosphate + H(+) = UMP + CO2. It functions in the pathway pyrimidine metabolism; UMP biosynthesis via de novo pathway; UMP from orotate: step 2/2. Its function is as follows. Catalyzes the decarboxylation of orotidine 5'-monophosphate (OMP) to uridine 5'-monophosphate (UMP). The sequence is that of Orotidine 5'-phosphate decarboxylase from Neisseria meningitidis serogroup B (strain ATCC BAA-335 / MC58).